We begin with the raw amino-acid sequence, 275 residues long: MTQQTPDQYRVFGNPIEQSKSPAIHHIFADKSQQNIDYQKQLVDTKDFSNAVADFIRHGGKGANVTAPFKEQALAIADELTERATLAGAVNTLTFKNGKIFGDNTDGEGLVQDLITNKVILNESRVLLLGAGGAARGVLLPLLAQNPRSIVIANRTASKAATLCQHFSDIRLSASGYQDLEQQHFDVIINATSASLSGNLPPIPTSLLSQNVVCYDMVYGKDETPFLKWAKEHGAMKVIDGLGMLVGQAAVSFEVWRGVTPEVQPVIDKLRASLK.

Shikimate-binding positions include 19-21 and threonine 66; that span reads SKS. The active-site Proton acceptor is the lysine 70. Glutamate 82 serves as a coordination point for NADP(+). Residues asparagine 91 and aspartate 106 each contribute to the shikimate site. Residues 130–134, 154–159, and methionine 217 contribute to the NADP(+) site; these read GAGGA and NRTASK. Tyrosine 219 contributes to the shikimate binding site. Position 241 (glycine 241) interacts with NADP(+).

It belongs to the shikimate dehydrogenase family. In terms of assembly, homodimer.

The enzyme catalyses shikimate + NADP(+) = 3-dehydroshikimate + NADPH + H(+). It participates in metabolic intermediate biosynthesis; chorismate biosynthesis; chorismate from D-erythrose 4-phosphate and phosphoenolpyruvate: step 4/7. In terms of biological role, involved in the biosynthesis of the chorismate, which leads to the biosynthesis of aromatic amino acids. Catalyzes the reversible NADPH linked reduction of 3-dehydroshikimate (DHSA) to yield shikimate (SA). The protein is Shikimate dehydrogenase (NADP(+)) of Colwellia psychrerythraea (strain 34H / ATCC BAA-681) (Vibrio psychroerythus).